A 754-amino-acid chain; its full sequence is LON peptidase N-terminal domain and RING finger protein 2 (754 aa).

2 TPR repeats span residues 23-58 (IAQR…QPDR) and 59-91 (GLCL…GALR). The disordered stretch occupies residues 112–136 (PLSAENPGGEPEAPGEGGPAPEPRA). Over residues 115-125 (AENPGGEPEAP) the composition is skewed to low complexity. 3 TPR repeats span residues 197 to 230 (LRRL…APDD), 231 to 264 (NSLL…EPLL), and 266 to 298 (KGHQ…NPEC). A disordered region spans residues 398 to 439 (GLKRQFPDDVEDAPDLNAPGKIPKKDLSLQRSPNSETEESQG). Over residues 426–439 (LQRSPNSETEESQG) the composition is skewed to polar residues. A TPR 6 repeat occupies 447 to 483 (FECALCMRLLFEPVTTPCGHTFCLKCLERCLDHAPHC). Residues 449–487 (CALCMRLLFEPVTTPCGHTFCLKCLERCLDHAPHCPLCK) form an RING-type zinc finger. In terms of domain architecture, Lon N-terminal spans 528 to 737 (MSELSNLTRD…AIRRILVIIT (210 aa)).

This Homo sapiens (Human) protein is LON peptidase N-terminal domain and RING finger protein 2 (LONRF2).